The primary structure comprises 215 residues: Pyridoxine/pyridoxamine 5'-phosphate oxidase (215 aa).

Substrate contacts are provided by residues 11 to 14 (RRDY) and Lys-69. FMN-binding positions include 64–69 (RVVLLK), 79–80 (YT), Lys-86, and Gln-108. Tyr-126, Arg-130, and Ser-134 together coordinate substrate. FMN contacts are provided by residues 143–144 (QS) and Trp-188. 194 to 196 (RLH) lines the substrate pocket. Arg-198 serves as a coordination point for FMN.

Belongs to the pyridoxamine 5'-phosphate oxidase family. Homodimer. FMN serves as cofactor.

It carries out the reaction pyridoxamine 5'-phosphate + O2 + H2O = pyridoxal 5'-phosphate + H2O2 + NH4(+). It catalyses the reaction pyridoxine 5'-phosphate + O2 = pyridoxal 5'-phosphate + H2O2. It functions in the pathway cofactor metabolism; pyridoxal 5'-phosphate salvage; pyridoxal 5'-phosphate from pyridoxamine 5'-phosphate: step 1/1. It participates in cofactor metabolism; pyridoxal 5'-phosphate salvage; pyridoxal 5'-phosphate from pyridoxine 5'-phosphate: step 1/1. In terms of biological role, catalyzes the oxidation of either pyridoxine 5'-phosphate (PNP) or pyridoxamine 5'-phosphate (PMP) into pyridoxal 5'-phosphate (PLP). This Legionella pneumophila (strain Lens) protein is Pyridoxine/pyridoxamine 5'-phosphate oxidase.